A 307-amino-acid polypeptide reads, in one-letter code: Methionyl-tRNA formyltransferase (307 aa).

A (6S)-5,6,7,8-tetrahydrofolate-binding site is contributed by 110-113 (SLLP).

This sequence belongs to the Fmt family.

The enzyme catalyses L-methionyl-tRNA(fMet) + (6R)-10-formyltetrahydrofolate = N-formyl-L-methionyl-tRNA(fMet) + (6S)-5,6,7,8-tetrahydrofolate + H(+). Attaches a formyl group to the free amino group of methionyl-tRNA(fMet). The formyl group appears to play a dual role in the initiator identity of N-formylmethionyl-tRNA by promoting its recognition by IF2 and preventing the misappropriation of this tRNA by the elongation apparatus. The sequence is that of Methionyl-tRNA formyltransferase from Rhodococcus erythropolis (strain PR4 / NBRC 100887).